A 462-amino-acid polypeptide reads, in one-letter code: Glycerol-3-phosphate dehydrogenase [NAD(+)] GPDHC1, cytosolic (462 aa).

NAD(+) contacts are provided by residues 48–53 (GAGAWG), Lys-196, and Ala-235. Lys-196 serves as a coordination point for substrate. Lys-285 serves as the catalytic Proton acceptor. NAD(+)-binding residues include Arg-347 and Gln-375. 347-348 (RN) lines the substrate pocket.

It belongs to the NAD-dependent glycerol-3-phosphate dehydrogenase family. In terms of tissue distribution, expressed in roots, leaves, flowers and siliques.

It is found in the cytoplasm. The protein resides in the cytosol. It carries out the reaction sn-glycerol 3-phosphate + NAD(+) = dihydroxyacetone phosphate + NADH + H(+). In terms of biological role, involved in cell redox homeostasis. Required for maintaining a steady state cellular NADH/NAD(+) ratio through a mitochondrial glycerol-3-phosphate redox shuttle. May function with the mitochondrial FAD-dependent glycerol-3-phosphate dehydrogenase SDP6 to shuttle reducing equivalents into the mitochondria for respiration. In Arabidopsis thaliana (Mouse-ear cress), this protein is Glycerol-3-phosphate dehydrogenase [NAD(+)] GPDHC1, cytosolic (GPDHC1).